A 261-amino-acid polypeptide reads, in one-letter code: Carbonic anhydrase 1 (261 aa).

The residue at position 2 (Ala-2) is an N-acetylalanine. The Alpha-carbonic anhydrase domain occupies 4 to 261 (SDWGYDSPNG…LKGRTVRAFF (258 aa)). Catalysis depends on His-65, which acts as the Proton donor/acceptor. Zn(2+)-binding residues include His-95, His-97, and His-120. Residues Thr-200 and 200–201 (TH) each bind substrate.

It belongs to the alpha-carbonic anhydrase family. Zn(2+) is required as a cofactor.

The protein localises to the cytoplasm. The enzyme catalyses hydrogencarbonate + H(+) = CO2 + H2O. It carries out the reaction urea = cyanamide + H2O. Its activity is regulated as follows. Inhibited by acetazolamide. Catalyzes the reversible hydration of carbon dioxide. Can hydrate cyanamide to urea. In Equus caballus (Horse), this protein is Carbonic anhydrase 1 (CA1).